The chain runs to 224 residues: Uridylate kinase (224 aa).

9–10 (GS) provides a ligand contact to ATP. Residue G43 coordinates UMP. Residues G44 and R48 each contribute to the ATP site. Residues D65 and 113-119 (VVPGQTT) each bind UMP. Residues T139, F145, and D148 each coordinate ATP.

It belongs to the UMP kinase family. As to quaternary structure, homohexamer.

The protein localises to the cytoplasm. The catalysed reaction is UMP + ATP = UDP + ADP. It participates in pyrimidine metabolism; CTP biosynthesis via de novo pathway; UDP from UMP (UMPK route): step 1/1. Its activity is regulated as follows. Inhibited by UTP. In terms of biological role, catalyzes the reversible phosphorylation of UMP to UDP. This is Uridylate kinase from Methanocella arvoryzae (strain DSM 22066 / NBRC 105507 / MRE50).